We begin with the raw amino-acid sequence, 190 residues long: Calcium-binding protein NCS-1 (190 aa).

G2 carries N-myristoyl glycine lipidation. EF-hand domains are found at residues 40–58, 60–95, 96–131, and 144–179; these read SGHL…FFPF, DPSA…TSRG, ELND…IYKM, and TPEK…DPTI. D73, D75, N77, Y79, E84, D109, D111, N113, E120, D157, N159, D161, Q163, and E168 together coordinate Ca(2+).

The protein belongs to the recoverin family.

The protein resides in the membrane. Its function is as follows. Negatively regulates sporulation perhaps by controlling Ca(2+)-dependent desensitization of git3. In Schizosaccharomyces pombe (strain 972 / ATCC 24843) (Fission yeast), this protein is Calcium-binding protein NCS-1 (ncs1).